The sequence spans 342 residues: Aristolochene synthase prx2 (342 aa).

Mg(2+) contacts are provided by aspartate 115, asparagine 244, serine 248, and glutamate 252. Residues arginine 340 and tyrosine 341 each contribute to the (2E,6E)-farnesyl diphosphate site.

This sequence belongs to the terpene synthase family. As to quaternary structure, homodimer. The cofactor is Mg(2+).

The catalysed reaction is (2E,6E)-farnesyl diphosphate = (+)-aristolochene + diphosphate. It participates in sesquiterpene biosynthesis; aristolochene biosynthesis; aristolochene from farnesyl diphosphate: step 1/1. Aristolochene synthase; part of the gene cluster that mediates the biosynthesis of PR-toxin, a bicyclic sesquiterpene belonging to the eremophilane class and acting as a mycotoxin. The first step of the pathway is catalyzed by the aristolochene synthase which performs the cyclization of trans,trans-farnesyl diphosphate (FPP) to the bicyclic sesquiterpene aristolochene. Following the formation of aristolochene, the non-oxygenated aristolochene is converted to the trioxygenated intermediate eremofortin B, via 7-epi-neopetasone. This conversion appears to involve three enzymes, a hydroxysterol oxidase-like enzyme, the quinone-oxidase prx3 that forms the quinone-type-structure in the bicyclic nucleus of aristolochene with the C8-oxo group and the C-3 hydroxyl group, and the P450 monooxygenase prx9 that introduces the epoxide at the double bond between carbons 1 and 2. No monoxy or dioxy-intermediates have been reported to be released to the broth, so these three early oxidative reactions may be coupled together. Eremofortin B is further oxidized by another P450 monooxygenase, that introduces a second epoxide between carbons 7 and 11 prior to acetylation to eremofortin A by the acetyltransferase prx11. The second epoxidation may be performed by a second P450 monooxygenase. After the acetylation step, the conversion of eremofortin A to eremofortin C and then to PR-toxin requires only two enzymes. First the conversion of eremofortin A to eremofortin C proceeds by oxidation of the side chain of the molecule at C-12 and is catalyzed by the short-chain oxidoreductase prx1. The cytochrome P450 monooxygenase prx8 also plays a role in this step. The primary alcohol formed at C-12 is finally oxidized by the short-chain alcohol dehydrogenase prx4 that forms PR-toxin. The protein is Aristolochene synthase prx2 of Penicillium rubens (strain ATCC 28089 / DSM 1075 / NRRL 1951 / Wisconsin 54-1255) (Penicillium chrysogenum).